A 1009-amino-acid chain; its full sequence is Rho GTPase-activating protein gacT (1009 aa).

Disordered stretches follow at residues 1-72 (MKNI…SRNH) and 89-117 (TSHH…QQTQ). A compositionally biased stretch (basic and acidic residues) spans 12–23 (FHKDKKEGDKQD). Low complexity predominate over residues 26-35 (GSSGSSGNSG). Positions 58 to 69 (ESYSGDNSPTLS) are enriched in polar residues. Residues 89–103 (TSHHSHSHNHNHNHN) are compositionally biased toward basic residues. Low complexity predominate over residues 104–117 (HQLTQPIQQQQQTQ). In terms of domain architecture, Rho-GAP spans 163 to 351 (VPLTQVPCRA…EVFPQHHLYY (189 aa)). 3 disordered regions span residues 388–420 (TISG…DSTA), 432–482 (PEQQ…TFRV), and 508–571 (GPSG…TTDQ). 3 stretches are compositionally biased toward low complexity: residues 394–415 (PSNG…ITSP), 432–468 (PEQQ…QPIS), and 512–521 (TTGTTPNGGS). The span at 522 to 546 (LSIGGGNGGNGGSSLSVGSGGGNGG) shows a compositional bias: gly residues. The segment covering 547 to 557 (SSLSVGSNTSV) has biased composition (low complexity). Positions 580–656 (AYTNNEDTKA…IEREIEKKRL (77 aa)) form a coiled coil. The tract at residues 686–713 (ISTIDGSGGSNRNSKNYGNGSSSSSNRR) is disordered. The span at 695 to 713 (SNRNSKNYGNGSSSSSNRR) shows a compositional bias: low complexity. Residues 715–743 (SNTINQQLQMQLQQLQIQQQQYQQTQQSQ) are a coiled coil. The segment at 759–781 (TTTTTTTSSGSNRFSSNRYKPVD) is disordered. The segment covering 766 to 781 (SSGSNRFSSNRYKPVD) has biased composition (polar residues). A coiled-coil region spans residues 839-952 (ENLVLLQQQY…IEEIHLLETY (114 aa)). Positions 965–1009 (STTKDLLTRSRSPTLPSSINMSTSSLGSSSSSAYNNNNNNNNVPK) are disordered. Residues 967–980 (TKDLLTRSRSPTLP) are compositionally biased toward polar residues. A compositionally biased stretch (low complexity) spans 981 to 1009 (SSINMSTSSLGSSSSSAYNNNNNNNNVPK).

The protein localises to the cytoplasm. In terms of biological role, rho GTPase-activating protein involved in the signal transduction pathway. This chain is Rho GTPase-activating protein gacT (gacT), found in Dictyostelium discoideum (Social amoeba).